The following is a 433-amino-acid chain: MPSEILVKILSYLDAVTLVCIGCVSRRFYHLADDNLIWVRKYAAAFRSKRSRWKATSVEETATSLSLLSVWDKEDGYWKKEYITKQISSVRAALTNSLSPVKRRTSLPSKTKESLRISGLGWTIILREASGKEHIMQHSNLSVNDNSVTVFWHDKNWPHVDTLSTLDLYGATPIFMEQYKGPNTSCPRWLSLIEKYDLSNLRKSAMIGCDRHVRVFCVNPGLLVGLWQENGGLAFVMANIHSHGLFERSIMGSDTIPYTLPPDTTFVDNYPDSMTFYGDKGFQLHIDIHGSKTYFLCSTFHNLFCRRAGINNGYVKFLMINLKNNREHLPLVGKVGLEWRTDCLNGRIESCIVVDMTLLDEDKKPIWYVSSPVCLRSACLPDFPQPAYSFEYMDSVGGVCADLGWFENTDEYFIVRLDIYLSVAKLQQWFGRQ.

The F-box domain occupies M1–K41.

In terms of assembly, directly interacts with SKP1 and CUL1. Expressed in testis.

Substrate-recognition component of the SCF (SKP1-CUL1-F-box protein)-type E3 ubiquitin ligase complex. The chain is F-box only protein 15 (Fbxo15) from Mus musculus (Mouse).